The sequence spans 1158 residues: Transient receptor potential cation channel subfamily M member 5 (1158 aa).

Over 1–729 (MQTTQSSCPG…LTRWRKFWGA (729 aa)) the chain is Cytoplasmic. Ser-129 bears the Phosphoserine; by PKC mark. Ca(2+)-binding residues include Cys-341, Asp-350, Asp-353, and Glu-354. A disordered region spans residues 488–507 (GRRMEERGPPKRPAGQKWLP). Residues 552 to 572 (KIIKEMSHLEKEAEVARTMRE) are a coiled coil. Residues 730-754 (PVTVFLGNVVMYFAFLFLFTYVLLV) traverse the membrane as a helical segment. Topologically, residues 755–764 (DFRPPPQGPS) are extracellular. A helical transmembrane segment spans residues 765–784 (GSEVTLYFWVFTLVLEEIRQ). Ca(2+)-binding residues include Glu-781 and Gln-784. The Cytoplasmic portion of the chain corresponds to 785–805 (GFFTDEDTHLVKKFTLYVEDN). A helical transmembrane segment spans residues 806–824 (WNKCDMVAIFLFIVGVTCR). The Ca(2+) site is built by Asn-807 and Asp-810. Residues 825-831 (MVPSVFE) lie on the Extracellular side of the membrane. The helical transmembrane segment at 832–854 (AGRTVLAIDFMVFTLRLIHIFAI) threads the bilayer. Topologically, residues 855-863 (HKQLGPKII) are cytoplasmic. Residues 864 to 893 (IVERMMKDVFFFLFFLSVWLVAYGVTTQAL) traverse the membrane as a helical segment. The Extracellular segment spans residues 894 to 902 (LHPHDGRLE). The segment at residues 903–938 (WIFRRVLYRPYLQIFGQIPLDEIDEARVNCSLHPLL) is an intramembrane region (pore-forming). The Selectivity filter motif lies at 917-919 (FGQ). At 939–950 (LESSASCPNLYA) the chain is on the extracellular side. The helical transmembrane segment at 951-985 (NWLVILLLVTFLLVTNVLLMNLLIAMFSYTFQVVQ) threads the bilayer. The Cytoplasmic segment spans residues 986–1158 (GNADMFWKFQ…LESGLPPSDT (173 aa)). Glu-1002 is a binding site for Ca(2+). Residues 1127-1141 (TYSSSQNCGCRSQPA) show a composition bias toward polar residues. The tract at residues 1127-1158 (TYSSSQNCGCRSQPASARDREYLESGLPPSDT) is disordered.

It belongs to the transient receptor (TC 1.A.4) family. LTrpC subfamily. TRPM5 sub-subfamily. In terms of assembly, homotetramer. In terms of processing, multiple phosphorylation sites regulate the Gq/ TRPM5 modulation axis, with the Ser-129 playing a substantial role in this positive modulation. As to expression, strongly expressed in liver, heart, testis, brain and kidney. Detected in fetal liver, kidney, spleen, brain, heart and lung, and in adult skin, eyes, spleen, stomach, small intestine, colon, lung, bladder, pancreas and thymus. Biallelically expressed at all stages and tissues examined. Also expressed in subsets of taste receptor cells of the tongue, in olfactory sensory neurons of the main olfactory epithelium and in the vomeronasal organ.

The protein localises to the cell membrane. The catalysed reaction is Na(+)(in) = Na(+)(out). It carries out the reaction K(+)(in) = K(+)(out). Its activity is regulated as follows. Ca(2+)-activated cation channel. Displays voltage dependence modulation. Regulated by PI(4,5)P2 levels. PI(4,5)P 2 reverses the Ca(2+) -induced desensitization of channels. Inhibited by flufenamic acid with an IC(50) of 24.5 uM and spermine with an IC(50) of 37 uM. Is a highly temperature-sensitive, heat activated channel showing a steep increase of inward currents at temperatures between 15 and 35 degrees Celsius. Heat activation is due to a shift of the voltage-dependent activation curve to negative potentials. The channel is blocked by extracellular acidification. Functionally, monovalent cation-selective ion channel activated by intracellular Ca(2+) in a voltage- and temperature-dependent manner. Mediates the transport of Na(+), K(+) and Cs(+) ions equally well. Activated directly by increase in intracellular Ca(2+), but is impermeable to it. The activation mechanism of TRPM5 involves a multistep process. TRPM5 activation involves ligand binding (i.e., tastant molecule, glucose stimulation) to Gq/G-protein coupled receptors (GPCR) and leads to the breakdown of phosphatidylinositol bisphosphate (PIP2) into diacylglycerol (DAG) and inositol trisphosphate (IP3), IP3 binds to its receptors in the endoplasmic reticulum and cause Ca(2+) release. Simultaneously with the intracellular Ca(2+) release, DAG activates the protein kinase C (PKC), which phosphorylates the TRPM5 channel. This phosphorylation combined with the bound Ca(2+), leads to a robust inward current allowing the entry of sodium ions (Na+) into the cell. This ion influx depolarizes the cell membrane, generating action potentials that propagate TRPM5 signals. Is a key player in sensing sweet, umami and bitter stimuli. May also be involved in sensing semiochemicals. Involved in insulin secretion by pancreatic beta cells. In Mus musculus (Mouse), this protein is Transient receptor potential cation channel subfamily M member 5.